A 470-amino-acid polypeptide reads, in one-letter code: Cysteine--tRNA ligase 1 (470 aa).

Position 29 (cysteine 29) interacts with Zn(2+). The 'HIGH' region signature appears at proline 31 to asparagine 41. Residues cysteine 221, histidine 246, and glutamate 250 each contribute to the Zn(2+) site. A 'KMSKS' region motif is present at residues lysine 279–serine 283. Position 282 (lysine 282) interacts with ATP.

It belongs to the class-I aminoacyl-tRNA synthetase family. In terms of assembly, monomer. The cofactor is Zn(2+).

The protein localises to the cytoplasm. The enzyme catalyses tRNA(Cys) + L-cysteine + ATP = L-cysteinyl-tRNA(Cys) + AMP + diphosphate. This is Cysteine--tRNA ligase 1 from Burkholderia lata (strain ATCC 17760 / DSM 23089 / LMG 22485 / NCIMB 9086 / R18194 / 383).